A 967-amino-acid chain; its full sequence is Isoleucine--tRNA ligase (967 aa).

The 'HIGH' region signature appears at 64-74; it reads PYANGNIHIGH. L-isoleucyl-5'-AMP is bound at residue Glu600. The 'KMSKS' region signature appears at 641–645; it reads KQSKS. Lys644 contributes to the ATP binding site.

It belongs to the class-I aminoacyl-tRNA synthetase family. IleS type 1 subfamily. Monomer.

It is found in the cytoplasm. The enzyme catalyses tRNA(Ile) + L-isoleucine + ATP = L-isoleucyl-tRNA(Ile) + AMP + diphosphate. Functionally, catalyzes the attachment of isoleucine to tRNA(Ile). As IleRS can inadvertently accommodate and process structurally similar amino acids such as valine, to avoid such errors it has two additional distinct tRNA(Ile)-dependent editing activities. One activity is designated as 'pretransfer' editing and involves the hydrolysis of activated Val-AMP. The other activity is designated 'posttransfer' editing and involves deacylation of mischarged Val-tRNA(Ile). The polypeptide is Isoleucine--tRNA ligase (Agrobacterium fabrum (strain C58 / ATCC 33970) (Agrobacterium tumefaciens (strain C58))).